A 367-amino-acid chain; its full sequence is Aurora kinase (367 aa).

The tract at residues 30–49 (TTATNGAPPQARVQPGKGYR) is disordered. A Protein kinase domain is found at 109-360 (FEIGKVLGKG…LKEVKKHPWI (252 aa)). Residues 115-123 (LGKGKFGRV) and Lys138 each bind ATP. Asp232 serves as the catalytic Proton acceptor.

The protein belongs to the protein kinase superfamily. Ser/Thr protein kinase family. Aurora subfamily.

It localises to the nucleus. It is found in the cytoplasm. The protein resides in the cytoskeleton. The protein localises to the spindle. Its subcellular location is the chromosome. It localises to the centromere. It is found in the kinetochore. It carries out the reaction L-seryl-[protein] + ATP = O-phospho-L-seryl-[protein] + ADP + H(+). The enzyme catalyses L-threonyl-[protein] + ATP = O-phospho-L-threonyl-[protein] + ADP + H(+). In terms of biological role, component of the chromosomal passenger complex (CPC), a complex that acts as a key regulator of chromosome segregation and cytokinesis. Has a role in error-correction of aberrent kinetochore-microtubule attachments to ensure that sister kinetochores become bioriented and connect to opposite poles by promoting spindle assembly checkpoint signaling. The polypeptide is Aurora kinase (IPL1) (Eremothecium gossypii (strain ATCC 10895 / CBS 109.51 / FGSC 9923 / NRRL Y-1056) (Yeast)).